The primary structure comprises 180 residues: NADH-quinone oxidoreductase subunit I (180 aa).

4Fe-4S ferredoxin-type domains follow at residues 48-80 (IVLTRDPDGDERCVACNLCAVACPVGCISLQKA) and 90-119 (EFFRINFSRCIFCGLCEEACPTTAIQLTPD). Residues C60, C63, C66, C70, C99, C102, C105, and C109 each contribute to the [4Fe-4S] cluster site. Positions 160–180 (GKPKGSAQKEAAPIDVKSILP) are disordered.

Belongs to the complex I 23 kDa subunit family. As to quaternary structure, NDH-1 is composed of 14 different subunits. Subunits NuoA, H, J, K, L, M, N constitute the membrane sector of the complex. Requires [4Fe-4S] cluster as cofactor.

It is found in the cell inner membrane. The enzyme catalyses a quinone + NADH + 5 H(+)(in) = a quinol + NAD(+) + 4 H(+)(out). NDH-1 shuttles electrons from NADH, via FMN and iron-sulfur (Fe-S) centers, to quinones in the respiratory chain. The immediate electron acceptor for the enzyme in this species is believed to be ubiquinone. Couples the redox reaction to proton translocation (for every two electrons transferred, four hydrogen ions are translocated across the cytoplasmic membrane), and thus conserves the redox energy in a proton gradient. The protein is NADH-quinone oxidoreductase subunit I of Tolumonas auensis (strain DSM 9187 / NBRC 110442 / TA 4).